The sequence spans 398 residues: S-adenosylmethionine decarboxylase proenzyme (398 aa).

Residues E18 and E21 contribute to the active site. S78 acts as the Schiff-base intermediate with substrate; via pyruvic acid in catalysis. S78 is subject to Pyruvic acid (Ser); by autocatalysis. The Proton donor; for catalytic activity role is filled by C92. Active-site proton acceptor; for processing activity residues include S243 and H256.

This sequence belongs to the eukaryotic AdoMetDC family. Requires pyruvate as cofactor. In terms of processing, is synthesized initially as an inactive proenzyme. Formation of the active enzyme involves a self-maturation process in which the active site pyruvoyl group is generated from an internal serine residue via an autocatalytic post-translational modification. Two non-identical subunits are generated from the proenzyme in this reaction, and the pyruvate is formed at the N-terminus of the alpha chain, which is derived from the carboxyl end of the proenzyme. The post-translation cleavage follows an unusual pathway, termed non-hydrolytic serinolysis, in which the side chain hydroxyl group of the serine supplies its oxygen atom to form the C-terminus of the beta chain, while the remainder of the serine residue undergoes an oxidative deamination to produce ammonia and the pyruvoyl group blocking the N-terminus of the alpha chain.

The catalysed reaction is S-adenosyl-L-methionine + H(+) = S-adenosyl 3-(methylsulfanyl)propylamine + CO2. The protein operates within amine and polyamine biosynthesis; S-adenosylmethioninamine biosynthesis; S-adenosylmethioninamine from S-adenosyl-L-methionine: step 1/1. The polypeptide is S-adenosylmethionine decarboxylase proenzyme (SAMDC) (Oryza sativa subsp. indica (Rice)).